We begin with the raw amino-acid sequence, 178 residues long: Large ribosomal subunit protein uL6 (178 aa).

The protein belongs to the universal ribosomal protein uL6 family. Part of the 50S ribosomal subunit.

In terms of biological role, this protein binds to the 23S rRNA, and is important in its secondary structure. It is located near the subunit interface in the base of the L7/L12 stalk, and near the tRNA binding site of the peptidyltransferase center. The polypeptide is Large ribosomal subunit protein uL6 (Streptococcus agalactiae serotype V (strain ATCC BAA-611 / 2603 V/R)).